A 435-amino-acid chain; its full sequence is Trigger factor (435 aa).

In terms of domain architecture, PPIase FKBP-type spans G163–P248.

It belongs to the FKBP-type PPIase family. Tig subfamily.

It localises to the cytoplasm. It carries out the reaction [protein]-peptidylproline (omega=180) = [protein]-peptidylproline (omega=0). Involved in protein export. Acts as a chaperone by maintaining the newly synthesized protein in an open conformation. Functions as a peptidyl-prolyl cis-trans isomerase. This Citrifermentans bemidjiense (strain ATCC BAA-1014 / DSM 16622 / JCM 12645 / Bem) (Geobacter bemidjiensis) protein is Trigger factor.